A 391-amino-acid polypeptide reads, in one-letter code: Na(+)/H(+) antiporter NhaA (391 aa).

11 helical membrane passes run 14-34 (AGGI…NSPL), 47-67 (FGMS…FLLI), 87-107 (IFPA…YVAF), 117-137 (GWAI…ALLG), 146-166 (VFLL…IALF), 171-191 (LSTM…MLNA), 205-225 (AILW…GVVI), 252-272 (VAFG…LEGV), 280-300 (MLPL…IFTF), 318-338 (FIHI…SIFI), and 356-376 (LGIL…LHFS).

The protein belongs to the NhaA Na(+)/H(+) (TC 2.A.33) antiporter family.

The protein resides in the cell inner membrane. The catalysed reaction is Na(+)(in) + 2 H(+)(out) = Na(+)(out) + 2 H(+)(in). Its function is as follows. Na(+)/H(+) antiporter that extrudes sodium in exchange for external protons. The polypeptide is Na(+)/H(+) antiporter NhaA (Vibrio campbellii (strain ATCC BAA-1116)).